The following is a 208-amino-acid chain: N-(5'-phosphoribosyl)anthranilate isomerase (208 aa).

The protein belongs to the TrpF family.

It carries out the reaction N-(5-phospho-beta-D-ribosyl)anthranilate = 1-(2-carboxyphenylamino)-1-deoxy-D-ribulose 5-phosphate. The protein operates within amino-acid biosynthesis; L-tryptophan biosynthesis; L-tryptophan from chorismate: step 3/5. In Neisseria gonorrhoeae (strain ATCC 700825 / FA 1090), this protein is N-(5'-phosphoribosyl)anthranilate isomerase.